Here is a 499-residue protein sequence, read N- to C-terminus: Ribose import ATP-binding protein RbsA (499 aa).

ABC transporter domains follow at residues 3–240 and 250–494; these read VEMT…VGRA and LTPG…TGGD. Position 35–42 (35–42) interacts with ATP; it reads GENGAGKS.

This sequence belongs to the ABC transporter superfamily. Ribose importer (TC 3.A.1.2.1) family. As to quaternary structure, the complex is composed of an ATP-binding protein (RbsA), two transmembrane proteins (RbsC) and a solute-binding protein (RbsB).

It localises to the cell membrane. It carries out the reaction D-ribose(out) + ATP + H2O = D-ribose(in) + ADP + phosphate + H(+). Functionally, part of the ABC transporter complex RbsABC involved in ribose import. Responsible for energy coupling to the transport system. The chain is Ribose import ATP-binding protein RbsA from Halalkalibacterium halodurans (strain ATCC BAA-125 / DSM 18197 / FERM 7344 / JCM 9153 / C-125) (Bacillus halodurans).